Reading from the N-terminus, the 167-residue chain is G/U mismatch-specific DNA glycosylase (167 aa).

This sequence belongs to the uracil-DNA glycosylase (UDG) superfamily. TDG/mug family. In terms of assembly, binds DNA as a monomer.

It localises to the cytoplasm. The catalysed reaction is Specifically hydrolyzes mismatched double-stranded DNA and polynucleotides, releasing free uracil.. Excises ethenocytosine and uracil, which can arise by alkylation or deamination of cytosine, respectively, from the corresponding mispairs with guanine in ds-DNA. It is capable of hydrolyzing the carbon-nitrogen bond between the sugar-phosphate backbone of the DNA and the mispaired base. The complementary strand guanine functions in substrate recognition. Required for DNA damage lesion repair in stationary-phase cells. The chain is G/U mismatch-specific DNA glycosylase from Pectobacterium carotovorum subsp. carotovorum (strain PC1).